We begin with the raw amino-acid sequence, 231 residues long: Ribonuclease HII (231 aa).

The 192-residue stretch at 23-214 folds into the RNase H type-2 domain; that stretch reads GPVAGVDEAG…VAKAHREWAL (192 aa). A divalent metal cation-binding residues include aspartate 29, glutamate 30, and aspartate 123.

This sequence belongs to the RNase HII family. It depends on Mn(2+) as a cofactor. The cofactor is Mg(2+).

Its subcellular location is the cytoplasm. It catalyses the reaction Endonucleolytic cleavage to 5'-phosphomonoester.. In terms of biological role, endonuclease that specifically degrades the RNA of RNA-DNA hybrids. This chain is Ribonuclease HII, found in Corynebacterium efficiens (strain DSM 44549 / YS-314 / AJ 12310 / JCM 11189 / NBRC 100395).